The primary structure comprises 52 residues: Conotoxin reg3h (52 aa).

Ala1 is a signal peptide. The propeptide occupies 2 to 33 (LPLDGDQPADQPAERMQDISPELNPLFHPVKR). Intrachain disulfides connect Cys35/Cys49, Cys36/Cys47, and Cys41/Cys50. Residues Pro38, Pro48, and Pro51 each carry the 4-hydroxyproline modification. Asn52 is modified (asparagine amide).

In terms of tissue distribution, expressed by the venom duct.

The protein resides in the secreted. This Conus regius (Crown cone) protein is Conotoxin reg3h.